The chain runs to 216 residues: 3-isopropylmalate dehydratase small subunit (216 aa).

It belongs to the LeuD family. LeuD type 1 subfamily. Heterodimer of LeuC and LeuD.

It carries out the reaction (2R,3S)-3-isopropylmalate = (2S)-2-isopropylmalate. It functions in the pathway amino-acid biosynthesis; L-leucine biosynthesis; L-leucine from 3-methyl-2-oxobutanoate: step 2/4. Its function is as follows. Catalyzes the isomerization between 2-isopropylmalate and 3-isopropylmalate, via the formation of 2-isopropylmaleate. This chain is 3-isopropylmalate dehydratase small subunit, found in Ralstonia nicotianae (strain ATCC BAA-1114 / GMI1000) (Ralstonia solanacearum).